An 86-amino-acid polypeptide reads, in one-letter code: Small ribosomal subunit protein bS20 (86 aa).

Belongs to the bacterial ribosomal protein bS20 family.

Its function is as follows. Binds directly to 16S ribosomal RNA. The sequence is that of Small ribosomal subunit protein bS20 from Paenarthrobacter aurescens (strain TC1).